A 524-amino-acid chain; its full sequence is MKEIKKTMTKQMTARRDDTPLHTAVREGKTDLLLEMIGEHDGVELKELLAEQNQSGETALYVAAEYGYTDMVKILMKHSDSVLAGTKAKNGFDAFHIAAKNGNLQVLDVLIEANPELSFTFDSSKTTALHTAASQGHGEIVCFLLDKGVDLAAIARSNGKTALHSAARNGHTVIVKKLIEKKAGMVTRVDKKGQTALHMAVKGQNTEIVDVLMEADGSLINSADNKGNTPLHIAVRKNRAEIVQTVLKYCEVSRVAVNKSGETALDIAEKTGLHEIVPLLQKIGMQNARSIKPAEKVEPSGSSRKLKETVSEIGHEVHTQLEQTGRTRREIQGIAKRVNKMHTEGLNNAINSTTLVAILIATVAFAAIFNVPGQYTDDPKDVPPGYSLGEARAAPRPEFLIFVVFDSFALFISLAVVVVQTSVVVIERRAKKQMMAIINKLMWMACIMISVAFVSLSFVVVGEKEKPLAVGVTAIGALIMVSTLGTMCYWVIANRIEGSKSSPASMMSDPELADSKHNRKLYAV.

ANK repeat units lie at residues 16–45 (RDDT…GVEL), 55–84 (SGET…SVLA), 90–119 (NGFD…ELSF), 124–153 (SKTT…DLAA), 158–187 (NGKT…GMVT), 192–222 (KGQT…LINS), 226–255 (KGNT…VSRV), and 260–289 (SGET…QNAR). 4 helical membrane passes run 349-369 (AINS…AAIF), 399-419 (FLIF…VVVV), 441-461 (LMWM…FVVV), and 472-492 (VTAI…YWVI). Serine 508 is subject to Phosphoserine.

The protein resides in the membrane. The sequence is that of Ankyrin repeat-containing protein At5g02620 from Arabidopsis thaliana (Mouse-ear cress).